A 67-amino-acid polypeptide reads, in one-letter code: Peptide Ctry2606 (67 aa).

Positions 1–23 are cleaved as a signal peptide; sequence MKTQTALFSFFLVLLLVATQTEG. Leu33 is modified (leucine amide). Positions 37–67 are excised as a propeptide; sequence ALRNQNFVDYAFDPSLSAADWRALETLLEEY.

This sequence belongs to the non-disulfide-bridged peptide (NDBP) superfamily. Short antimicrobial peptide (group 4) family. In terms of tissue distribution, expressed by the venom gland.

It is found in the secreted. Antimicrobial peptide. The polypeptide is Peptide Ctry2606 (Chaerilus tryznai (Scorpion)).